Reading from the N-terminus, the 451-residue chain is Phenylalanine--tRNA ligase, mitochondrial (451 aa).

Substrate-binding positions include 157-160, arginine 179, 186-188, and 193-195; these read SAHQ, QHY, and QLE. An N6-acetyllysine modification is found at lysine 202. Substrate is bound by residues glutamate 287 and phenylalanine 312. An FDX-ACB domain is found at 358–450; the sequence is SKYPAVFNDI…AVQLLGVEGR (93 aa).

Belongs to the class-II aminoacyl-tRNA synthetase family. As to quaternary structure, monomer.

It is found in the mitochondrion matrix. It localises to the mitochondrion. The enzyme catalyses tRNA(Phe) + L-phenylalanine + ATP = L-phenylalanyl-tRNA(Phe) + AMP + diphosphate + H(+). Its function is as follows. Is responsible for the charging of tRNA(Phe) with phenylalanine in mitochondrial translation. To a lesser extent, also catalyzes direct attachment of m-Tyr (an oxidized version of Phe) to tRNA(Phe), thereby opening the way for delivery of the misacylated tRNA to the ribosome and incorporation of ROS-damaged amino acid into proteins. The chain is Phenylalanine--tRNA ligase, mitochondrial (Fars2) from Mus musculus (Mouse).